The following is a 310-amino-acid chain: ADP-L-glycero-D-manno-heptose-6-epimerase (310 aa).

NADP(+)-binding positions include 10–11, 31–32, Lys38, Lys53, 75–79, and Asn92; these read FI, DN, and EGACS. Catalysis depends on Tyr140, which acts as the Proton acceptor. Lys144 provides a ligand contact to NADP(+). Position 169 (Asn169) interacts with substrate. Val170 and Lys178 together coordinate NADP(+). Lys178 functions as the Proton acceptor in the catalytic mechanism. Residues Ser180, His187, 201–204, Arg209, and Tyr272 contribute to the substrate site; that span reads FEGS.

It belongs to the NAD(P)-dependent epimerase/dehydratase family. HldD subfamily. Homopentamer. The cofactor is NADP(+).

The catalysed reaction is ADP-D-glycero-beta-D-manno-heptose = ADP-L-glycero-beta-D-manno-heptose. The protein operates within nucleotide-sugar biosynthesis; ADP-L-glycero-beta-D-manno-heptose biosynthesis; ADP-L-glycero-beta-D-manno-heptose from D-glycero-beta-D-manno-heptose 7-phosphate: step 4/4. Functionally, catalyzes the interconversion between ADP-D-glycero-beta-D-manno-heptose and ADP-L-glycero-beta-D-manno-heptose via an epimerization at carbon 6 of the heptose. This is ADP-L-glycero-D-manno-heptose-6-epimerase from Klebsiella pneumoniae subsp. pneumoniae (strain ATCC 700721 / MGH 78578).